The following is a 454-amino-acid chain: tRNA modification GTPase MnmE (454 aa).

Residues Arg-23, Glu-80, and Lys-120 each coordinate (6S)-5-formyl-5,6,7,8-tetrahydrofolate. Positions 216–377 constitute a TrmE-type G domain; it reads GMKVVIAGRP…LRNHLKQSMG (162 aa). K(+) is bound at residue Asn-226. GTP contacts are provided by residues 226 to 231, 245 to 251, 270 to 273, 335 to 338, and 358 to 360; these read NAGKSS, TDIAGTT, DTAG, NKAD, and SAR. Residue Ser-230 coordinates Mg(2+). Residues Thr-245, Ile-247, and Thr-250 each coordinate K(+). Thr-251 contacts Mg(2+). Residue Lys-454 participates in (6S)-5-formyl-5,6,7,8-tetrahydrofolate binding.

It belongs to the TRAFAC class TrmE-Era-EngA-EngB-Septin-like GTPase superfamily. TrmE GTPase family. As to quaternary structure, homodimer. Heterotetramer of two MnmE and two MnmG subunits. Requires K(+) as cofactor.

The protein localises to the cytoplasm. Its function is as follows. Exhibits a very high intrinsic GTPase hydrolysis rate. Involved in the addition of a carboxymethylaminomethyl (cmnm) group at the wobble position (U34) of certain tRNAs, forming tRNA-cmnm(5)s(2)U34. The polypeptide is tRNA modification GTPase MnmE (Salmonella typhi).